A 239-amino-acid polypeptide reads, in one-letter code: DnaA regulatory inactivator Hda (239 aa).

Belongs to the DnaA family. HdA subfamily. The active form seems to be an ADP-bound monomer. Forms the RIDA complex (regulatory inactivation of DnaA) of ATP-DnaA, ADP-Hda and the DNA-loaded beta sliding clamp (dnaN).

Mediates the interaction of DNA replication initiator protein DnaA with DNA polymerase subunit beta sliding clamp (dnaN). Stimulates hydrolysis of ATP-DnaA to ADP-DnaA, rendering DnaA inactive for reinitiation, a process called regulatory inhibition of DnaA or RIDA. The sequence is that of DnaA regulatory inactivator Hda from Yersinia pseudotuberculosis serotype O:1b (strain IP 31758).